Consider the following 71-residue polypeptide: Exodeoxyribonuclease 7 small subunit (71 aa).

The protein belongs to the XseB family. Heterooligomer composed of large and small subunits.

It is found in the cytoplasm. It carries out the reaction Exonucleolytic cleavage in either 5'- to 3'- or 3'- to 5'-direction to yield nucleoside 5'-phosphates.. Bidirectionally degrades single-stranded DNA into large acid-insoluble oligonucleotides, which are then degraded further into small acid-soluble oligonucleotides. This is Exodeoxyribonuclease 7 small subunit from Clostridium botulinum (strain Kyoto / Type A2).